Here is a 204-residue protein sequence, read N- to C-terminus: Large ribosomal subunit protein uL4 (204 aa).

Positions 49–75 (TKGRSDVSGGGKKPWRQKGRGGARAGS) are disordered.

Belongs to the universal ribosomal protein uL4 family. In terms of assembly, part of the 50S ribosomal subunit.

One of the primary rRNA binding proteins, this protein initially binds near the 5'-end of the 23S rRNA. It is important during the early stages of 50S assembly. It makes multiple contacts with different domains of the 23S rRNA in the assembled 50S subunit and ribosome. Functionally, forms part of the polypeptide exit tunnel. In Campylobacter lari (strain RM2100 / D67 / ATCC BAA-1060), this protein is Large ribosomal subunit protein uL4.